Here is a 1422-residue protein sequence, read N- to C-terminus: Guanine nucleotide exchange factor subunit RIC1 (1422 aa).

WD repeat units follow at residues 64 to 103 (TQFGSYKQAEWRPDSTMIAVSTANGYILFFHITSSRGDKY) and 304 to 343 (NKTGAVKLIRWSPDNSAVIVTWEYGGLSLWSVFGAQLICT). 2 disordered regions span residues 442–462 (NPKYSSARAERMPRHEKSPFA) and 986–1005 (SGESETPPSTPTSQEPSSSG). The span at 449 to 460 (RAERMPRHEKSP) shows a compositional bias: basic and acidic residues. Phosphothreonine is present on residues T991 and T995. A phosphoserine mark is found at S1014, S1016, S1018, S1036, and S1171. The tract at residues 1021–1048 (AENVPPGKFGLQKTLSMPTGPSGKRWSK) is disordered. 2 disordered regions span residues 1179–1198 (THRDTDRASSPGPQMQDAFL) and 1355–1422 (DTFQ…CSVS). The segment covering 1378-1396 (GSCSHGSISQSEPGSNNVV) has biased composition (polar residues). A compositionally biased stretch (acidic residues) spans 1403-1412 (TTQADEEEPL).

The protein belongs to the RIC1 family. In terms of assembly, forms a complex with RGP1; the interaction enhances RAB6A GTPase activity. Interacts (via central domain) with RGP1. Interacts with RAB6A; the interaction is direct with a preference for RAB6A-GDP. Interacts (via C-terminus domain) with RAB33B; the interaction is direct with a preference for RAB33B-GTP. Interacts with GJA1. Expressed in the eye lens.

It localises to the cytoplasm. The protein resides in the cytosol. Its subcellular location is the membrane. In terms of biological role, the RIC1-RGP1 complex acts as a guanine nucleotide exchange factor (GEF), which activates RAB6A by exchanging bound GDP for free GTP, and may thereby be required for efficient fusion of endosome-derived vesicles with the Golgi compartment. The RIC1-RGP1 complex participates in the recycling of mannose-6-phosphate receptors. Required for phosphorylation and localization of GJA1. Is a regulator of procollagen transport and secretion, and is required for correct cartilage morphogenesis and development of the craniofacial skeleton. The protein is Guanine nucleotide exchange factor subunit RIC1 of Mus musculus (Mouse).